Here is a 477-residue protein sequence, read N- to C-terminus: Myc-associated zinc finger protein (477 aa).

Disordered regions lie at residues 59–78 (AQSP…APAA) and 121–146 (TVDT…PAAE). Residues 130–141 (PPAPPPPPPPVS) are compositionally biased toward pro residues. C2H2-type zinc fingers lie at residues 190–212 (YICA…EAIH), 279–301 (HACE…KLSH), 307–329 (YQCP…VRSH), and 337–360 (YNCS…RQVH). Ser361 carries the post-translational modification Phosphoserine. The segment at 366–388 (FKCEKCEAAFATKDRLRAHTVRH) adopts a C2H2-type 5 zinc-finger fold. The C2H2-type 6; atypical zinc-finger motif lies at 392–413 (VPCHVCGKMLSSAYISDHMKVH).

Interacts with BPTF. In terms of assembly, forms a heterodimer with MAZ isoform 2; the interaction inhibits MAZ isoform 1-mediated transcription activation. As to quaternary structure, forms a heterodimer with MAZ isoform 1; the interaction inhibits MAZ isoform 1-mediated transcription activation. As to expression, present in kidney, liver and brain. In the brain, highest levels are found in motor cortex and midfrontal cortex (at protein level). In terms of tissue distribution, expressed in the heart, brain, placenta, lung, liver, skeletal muscle and weakly expressed in the kidney. Expressed in the joint synovium.

It is found in the nucleus. In terms of biological role, transcriptional regulator, potentially with dual roles in transcription initiation and termination. Binds DNA and functions as a transcriptional activator. Binds to two G/A-rich sites, ME1a1 and ME1a2, within the MYC promoter having greater affinity for the former. Also binds to multiple G/C-rich sites within the promoter of the Sp1 family of transcription factors. Its function is as follows. Binds DNA and functions as a transcriptional activator. Inhibits MAZ isoform 1-mediated transcription. Functionally, binds DNA and functions as a transcriptional activator. The polypeptide is Myc-associated zinc finger protein (MAZ) (Homo sapiens (Human)).